The chain runs to 475 residues: Protein translocase subunit SecD (475 aa).

Transmembrane regions (helical) follow at residues 7-27, 313-333, 338-358, 364-384, 410-430, and 437-457; these read LLIT…SLKF, KGFM…FIYY, LIAD…MAYL, LPGV…NVLI, FWTI…LFQF, and GFAV…VTVT.

The protein belongs to the SecD/SecF family. SecD subfamily. In terms of assembly, forms a complex with SecF. Part of the essential Sec protein translocation apparatus which comprises SecA, SecYEG and auxiliary proteins SecDF. Other proteins may also be involved.

Its subcellular location is the cell inner membrane. In terms of biological role, part of the Sec protein translocase complex. Interacts with the SecYEG preprotein conducting channel. SecDF uses the proton motive force (PMF) to complete protein translocation after the ATP-dependent function of SecA. This Endomicrobium trichonymphae protein is Protein translocase subunit SecD.